The chain runs to 387 residues: Galactokinase (387 aa).

Glutamate 33–aspartate 36 is a substrate binding site. Residues serine 67 and glycine 124–serine 130 contribute to the ATP site. Residues serine 130 and glutamate 162 each coordinate Mg(2+). The active-site Proton acceptor is aspartate 174. Tyrosine 224 provides a ligand contact to substrate.

This sequence belongs to the GHMP kinase family. GalK subfamily.

It localises to the cytoplasm. The catalysed reaction is alpha-D-galactose + ATP = alpha-D-galactose 1-phosphate + ADP + H(+). The protein operates within carbohydrate metabolism; galactose metabolism. Catalyzes the transfer of the gamma-phosphate of ATP to D-galactose to form alpha-D-galactose-1-phosphate (Gal-1-P). This Ligilactobacillus salivarius (strain UCC118) (Lactobacillus salivarius) protein is Galactokinase.